A 468-amino-acid chain; its full sequence is Gasdermin-C (468 aa).

Residues 1–230 (MSYTFDWLSK…CVILTSANTK (230 aa)) are triggers pyroptosis.

The protein belongs to the gasdermin family. Homooligomer; homooligomeric ring-shaped pore complex containing 27-28 subunits when inserted in the membrane. In terms of processing, cleavage by CASP8 relieves autoinhibition by releasing the N-terminal moiety (Gasdermin-C, N-terminal) that initiates pyroptosis. Post-translationally, palmitoylated.

The protein resides in the cytoplasm. It localises to the cytosol. Its subcellular location is the cell membrane. With respect to regulation, the full-length protein before cleavage is inactive: intramolecular interactions between N- and C-terminal domains mediate autoinhibition in the absence of activation signal. The intrinsic pyroptosis-inducing activity is carried by the released N-terminal moiety (Gasdermin-C, N-terminal) following cleavage by caspase CASP8. Its function is as follows. This form constitutes the precursor of the pore-forming protein: upon cleavage, the released N-terminal moiety (Gasdermin-C, N-terminal) binds to membranes and forms pores, triggering pyroptosis. In terms of biological role, pore-forming protein that causes membrane permeabilization and pyroptosis. Produced by the cleavage of gasdermin-C by caspase CASP8 in response to death signals. After cleavage, moves to the plasma membrane where it strongly binds to membrane inner leaflet lipids. Homooligomerizes within the membrane and forms pores of 10-15 nanometers (nm) of inner diameter, triggering pyroptosis. The chain is Gasdermin-C from Mus musculus (Mouse).